The sequence spans 266 residues: uncharacterized protein (266 aa).

A run of 7 helical transmembrane segments spans residues 25-45 (LPSLLVLGFLGGAFIALGYLL), 64-84 (IGAAVFPVGLILVVLAGAELI), 111-131 (IVTIMNLIGALFVAYFFGHLV), 158-178 (VLISAIGCNWLVCLAVWLSFG), 186-206 (ILGIWFPIMAFVAIGFQHVVA), 209-229 (FVIPAAIFAGSFTWGQFIGNI), and 230-250 (IPAFIGNVIGGAVFVGLIYFI).

This sequence belongs to the FNT transporter (TC 1.A.16) family.

It is found in the cell membrane. This is an uncharacterized protein from Bacillus subtilis (strain 168).